A 398-amino-acid chain; its full sequence is Dihydrolipoyllysine-residue succinyltransferase component of 2-oxoglutarate dehydrogenase complex (398 aa).

One can recognise a Lipoyl-binding domain in the interval 2-77 (SIKIIIPSLG…TVGEEVGEIN (76 aa)). K43 is modified (N6-lipoyllysine). A Peripheral subunit-binding (PSBD) domain is found at 112–149 (ILAPSVQKLVTENKLDPNNIKGTGRGGRITKYDVLETI). Active-site residues include H369 and D373.

Belongs to the 2-oxoacid dehydrogenase family. As to quaternary structure, forms a 24-polypeptide structural core with octahedral symmetry. Part of the 2-oxoglutarate dehydrogenase (OGDH) complex composed of E1 (2-oxoglutarate dehydrogenase), E2 (dihydrolipoamide succinyltransferase) and E3 (dihydrolipoamide dehydrogenase); the complex contains multiple copies of the three enzymatic components (E1, E2 and E3). The cofactor is (R)-lipoate.

It carries out the reaction N(6)-[(R)-dihydrolipoyl]-L-lysyl-[protein] + succinyl-CoA = N(6)-[(R)-S(8)-succinyldihydrolipoyl]-L-lysyl-[protein] + CoA. The protein operates within amino-acid degradation; L-lysine degradation via saccharopine pathway; glutaryl-CoA from L-lysine: step 6/6. Functionally, E2 component of the 2-oxoglutarate dehydrogenase (OGDH) complex which catalyzes the second step in the conversion of 2-oxoglutarate to succinyl-CoA and CO(2). This chain is Dihydrolipoyllysine-residue succinyltransferase component of 2-oxoglutarate dehydrogenase complex (sucB), found in Rickettsia typhi (strain ATCC VR-144 / Wilmington).